A 172-amino-acid polypeptide reads, in one-letter code: Female-specific lacrimal gland protein (172 aa).

An N-terminal signal peptide occupies residues 1–16 (MVKFLLLALALGVSCA). 2 disulfide bridges follow: cysteine 60–cysteine 64 and cysteine 79–cysteine 170.

The protein belongs to the calycin superfamily. Lipocalin family. As to expression, expressed in the lacrimal gland from where it is secreted into tears (at protein level).

Its subcellular location is the secreted. In Mesocricetus auratus (Golden hamster), this protein is Female-specific lacrimal gland protein.